The sequence spans 546 residues: Cytochrome P450 monooxygenase gloP (546 aa).

Residues 17–37 (TLSGGILTFLFIVVIAHFVLT) traverse the membrane as a helical segment. N-linked (GlcNAc...) asparagine glycans are attached at residues asparagine 189, asparagine 413, and asparagine 416. Residue cysteine 492 participates in heme binding.

Belongs to the cytochrome P450 family. It depends on heme as a cofactor.

It is found in the membrane. Its pathway is mycotoxin biosynthesis. Its function is as follows. Cytochrome P450 monooxygenase; part of the gene cluster that mediates the biosynthesis of pneumocandins, lipohexapeptides of the echinocandin family that prevent fungal cell wall formation by non-competitive inhibition of beta-1,3-glucan synthase. The 10,12-dimethylmyristoyl side chain is synthesized by the reducing polyketide synthase gloL/GLPKS4. The thioesterase gloN/GLHYD exclusively interacts with gloL/GLPKS4 to maintain turnover of the polyketide side chain. The 10R,12S-dimethylmyristic acid is then transferred to the first thiolation domain of the nonribosomal peptide synthetase gloA/GLNRPS4 by the acyl-AMP ligase gloD/GLligase, followed by its acylation to L-ornithine to trigger elongation of the cyclic hexapeptide. L-ornithine, 4R-hydroxyl-L-proline (generated from L-proline by the dioxygenase gloF/GLOXY2), 3S-hydroxyl-L-homotyrosine (generated by gloG/GLHtyB, gloH/GLHtyA, gloI/GLHtyC, gloJ/GLHtyD and hydroxylated at C-3 by the dioxygenase gloM/GLOXY1), 3R-hydroxyl-L-glutamine (generated from L-glutamine probably by the dioxygenase gloE/GLOXY3) and 3S-hydroxyl-L-proline (generated from L-proline by the dioxygenase gloF/GLOXY2 to yield pneumocandin B0), or 3S-hydroxyl-4S-methyl-L-proline (generated from L-leucine by the dioxygenase gloC/GLOXY4 to yield pneumocandin A0) are sequentially added to the growing chain. The last C domain of gloA/GLNRPS4 is proposed to be responsible for cyclization by condensation to form the peptide bond between L-ornithine and 3S-hydroxyl-4S-methyl-L-proline (for pneumocandin A0) or 3S-hydroxyl-L-proline (for pneumocandin B0). Finally, the subsequent C-4 hydroxylation of 3S-hydroxyl-L-homotyrosine and L-ornithine dihydroxylation at C-4 and C-5 are performed by the cytochrome P450 monooxygenases gloP/GLP450-1 and gloO/GLP450-2, respectively. In Glarea lozoyensis (strain ATCC 20868 / MF5171), this protein is Cytochrome P450 monooxygenase gloP.